The primary structure comprises 337 residues: Cytoskeleton protein RodZ (337 aa).

Residues M1 to G111 are Cytoplasmic-facing. Residues L19–L71 enclose the HTH cro/C1-type domain. Residues Q30–E49 constitute a DNA-binding region (H-T-H motif). The chain crosses the membrane as a helical; Signal-anchor for type II membrane protein span at residues W112–W132. Over W133–Q337 the chain is Periplasmic. The segment covering T144–N167 has biased composition (polar residues). Residues T144–A235 are disordered. Residues T168–Q207 are compositionally biased toward low complexity. The segment covering N208–V218 has biased composition (polar residues). Positions D219–A235 are enriched in low complexity.

Belongs to the RodZ family.

The protein localises to the cell inner membrane. In terms of biological role, cytoskeletal protein that is involved in cell-shape control through regulation of the length of the long axis. The protein is Cytoskeleton protein RodZ of Escherichia coli (strain K12 / MC4100 / BW2952).